The following is a 1055-amino-acid chain: Kinesin-like protein KIN-7D, mitochondrial (1055 aa).

A compositionally biased stretch (low complexity) spans 1–23 (MASSSSRTRSSRPPSPASSTSSS). A disordered region spans residues 1–36 (MASSSSRTRSSRPPSPASSTSSSHLSNRLIPRSNST). The transit peptide at 1-96 (MASSSSRTRS…PMDDTISSER (96 aa)) directs the protein to the mitochondrion. Positions 98 to 415 (SISVTVRFRP…LKFASRAKSI (318 aa)) constitute a Kinesin motor domain. An ATP-binding site is contributed by 178 to 185 (GVTSSGKT). 3 coiled-coil regions span residues 419–503 (ASRN…ILVS), 618–653 (PENSQTQIQNLEREIHEKQRQMRGLEQLIIESGEAS), and 694–823 (LQEK…LAQT). Residues 826-856 (PMNGVNRKYNDGARSGRKGRISSSRSSGDEF) are disordered. A coiled-coil region spans residues 880-911 (LESALAEKEFIEDEYRKKAEEAKRREEALEND). The segment at 926–963 (NGALPEPNGTDPGRELEKSQSHAVLKERQVSSAPRQPE) is disordered. The span at 937 to 954 (PGRELEKSQSHAVLKERQ) shows a compositional bias: basic and acidic residues. An RING-type zinc finger spans residues 1008–1043 (CKVCFESPTAAILLPCRHFCLCKSCSLACSECPICR).

The protein belongs to the TRAFAC class myosin-kinesin ATPase superfamily. Kinesin family. KIN-7 subfamily.

Its subcellular location is the mitochondrion. This chain is Kinesin-like protein KIN-7D, mitochondrial, found in Arabidopsis thaliana (Mouse-ear cress).